A 365-amino-acid chain; its full sequence is Chorismate synthase (365 aa).

Arg48 contacts NADP(+). Residues 130 to 132, 242 to 243, Gly290, 305 to 309, and Arg331 each bind FMN; these read RSS, NA, and KPTSS.

The protein belongs to the chorismate synthase family. In terms of assembly, homotetramer. It depends on FMNH2 as a cofactor.

It carries out the reaction 5-O-(1-carboxyvinyl)-3-phosphoshikimate = chorismate + phosphate. Its pathway is metabolic intermediate biosynthesis; chorismate biosynthesis; chorismate from D-erythrose 4-phosphate and phosphoenolpyruvate: step 7/7. Functionally, catalyzes the anti-1,4-elimination of the C-3 phosphate and the C-6 proR hydrogen from 5-enolpyruvylshikimate-3-phosphate (EPSP) to yield chorismate, which is the branch point compound that serves as the starting substrate for the three terminal pathways of aromatic amino acid biosynthesis. This reaction introduces a second double bond into the aromatic ring system. In Erythrobacter litoralis (strain HTCC2594), this protein is Chorismate synthase.